The following is a 339-amino-acid chain: Anthranilate phosphoribosyltransferase (339 aa).

5-phospho-alpha-D-ribose 1-diphosphate is bound by residues Gly-79, 82–83, Thr-87, 89–92, 107–115, and Ser-119; these read GD, NIST, and KHGNRAVSS. Gly-79 contacts anthranilate. A Mg(2+)-binding site is contributed by Ser-91. Anthranilate is bound at residue Asn-110. Residue Arg-165 participates in anthranilate binding. Asp-224 and Glu-225 together coordinate Mg(2+).

This sequence belongs to the anthranilate phosphoribosyltransferase family. As to quaternary structure, homodimer. Requires Mg(2+) as cofactor.

The enzyme catalyses N-(5-phospho-beta-D-ribosyl)anthranilate + diphosphate = 5-phospho-alpha-D-ribose 1-diphosphate + anthranilate. It participates in amino-acid biosynthesis; L-tryptophan biosynthesis; L-tryptophan from chorismate: step 2/5. In terms of biological role, catalyzes the transfer of the phosphoribosyl group of 5-phosphorylribose-1-pyrophosphate (PRPP) to anthranilate to yield N-(5'-phosphoribosyl)-anthranilate (PRA). This chain is Anthranilate phosphoribosyltransferase, found in Geobacillus thermodenitrificans (strain NG80-2).